Reading from the N-terminus, the 565-residue chain is Oxygen-dependent choline dehydrogenase (565 aa).

Residue Asp6–Glu35 participates in FAD binding. His475 functions as the Proton acceptor in the catalytic mechanism. The tract at residues Arg541–Ala565 is disordered.

Belongs to the GMC oxidoreductase family. FAD serves as cofactor.

The catalysed reaction is choline + A = betaine aldehyde + AH2. It catalyses the reaction betaine aldehyde + NAD(+) + H2O = glycine betaine + NADH + 2 H(+). Its pathway is amine and polyamine biosynthesis; betaine biosynthesis via choline pathway; betaine aldehyde from choline (cytochrome c reductase route): step 1/1. Its function is as follows. Involved in the biosynthesis of the osmoprotectant glycine betaine. Catalyzes the oxidation of choline to betaine aldehyde and betaine aldehyde to glycine betaine at the same rate. The chain is Oxygen-dependent choline dehydrogenase from Ectopseudomonas mendocina (strain ymp) (Pseudomonas mendocina).